A 281-amino-acid polypeptide reads, in one-letter code: 4-deoxy-L-threo-5-hexosulose-uronate ketol-isomerase (281 aa).

4 residues coordinate Zn(2+): H198, H200, E205, and H248.

Belongs to the KduI family. Zn(2+) serves as cofactor.

It carries out the reaction 5-dehydro-4-deoxy-D-glucuronate = 3-deoxy-D-glycero-2,5-hexodiulosonate. It functions in the pathway glycan metabolism; pectin degradation; 2-dehydro-3-deoxy-D-gluconate from pectin: step 4/5. Catalyzes the isomerization of 5-dehydro-4-deoxy-D-glucuronate to 3-deoxy-D-glycero-2,5-hexodiulosonate. This chain is 4-deoxy-L-threo-5-hexosulose-uronate ketol-isomerase, found in Levilactobacillus brevis (strain ATCC 367 / BCRC 12310 / CIP 105137 / JCM 1170 / LMG 11437 / NCIMB 947 / NCTC 947) (Lactobacillus brevis).